The primary structure comprises 369 residues: MTSTLQTLAFKLAPPSREAGSGQLEPCSDVQGRRYEVVPSVVCSMCCLFGIIYCFFGYRCFKAVLFLTGLMFGSVIIFLLCYKERVLDTQLSVEASVGIGLGIGTLCGLVTMLVRSVGLFMVGLLLGLLVGIGTLIGMEELSSNPPRSVWVPLGVLLGLGMLFAVLTLQWQRCFTTLSTAVFGAAVIVVATDYFVELFALVRYIYERVKTGPREPVCWTTWVVLGAWPALALLGVLVQWRVTAEGYSHTKVMISRQQRRVQLMRIRQKEERRESSRKKKRKQPQSAQHTHAAKALHPEPAYRRKPNPIRRFDGDVLSPSYIQSFRDRQVDGRAYPVGGLMPSGHTSVDMDYDCGSTVPLTAGVGPHVRV.

7 helical membrane-spanning segments follow: residues 37-57, 60-80, 93-113, 117-137, 148-168, 181-201, and 216-236; these read VVPS…CFFG, CFKA…IFLL, VEAS…VTML, VGLF…TLIG, SVWV…VLTL, VFGA…FALV, and VCWT…LGVL. The interval 266–308 is disordered; sequence RQKEERRESSRKKKRKQPQSAQHTHAAKALHPEPAYRRKPNPI.

Belongs to the TMEM198 family.

The protein resides in the membrane. The chain is Transmembrane protein 198 (tmem198ab) from Danio rerio (Zebrafish).